The sequence spans 1115 residues: Eukaryotic translation initiation factor 2-alpha kinase 3 (1115 aa).

The N-terminal stretch at 1 to 29 is a signal peptide; the sequence is MERATGPGSLARTLLLPLLLGLVAGTVTA. The Extracellular segment spans residues 30–514; the sequence is RRTSDLLAPT…PNYKNIRKKD (485 aa). Residues 74–101 form a disordered region; the sequence is SEALPAAAGEQEAREPEPEPEEEPDIRP. A glycan (N-linked (GlcNAc...) asparagine) is linked at Asn259. Residues 515–535 form a helical membrane-spanning segment; that stretch reads PVLLLHWWKEIVGTIVFCIVA. Topologically, residues 536 to 1115 are cytoplasmic; sequence TTFIVRRLFH…SSPHSPLPSN (580 aa). Residues 593 to 1076 enclose the Protein kinase domain; it reads FEPIQCMGRG…AASIIENAIF (484 aa). 599 to 607 contributes to the ATP binding site; sequence MGRGGFGVV. Position 619 is a phosphotyrosine; by autocatalysis (Tyr619). An ATP-binding site is contributed by Lys622. Positions 647–887 are insert loop; the sequence is EHPGIVRYFN…SPKVYLYIQM (241 aa). Phosphoserine is present on Ser715. Phosphothreonine is present on Thr802. Disordered regions lie at residues 807 to 832 and 841 to 860; these read VFEDSGCDNASSKEEPRMNQPPVGNH and RHSGSKSSEPTVSVSPSRPT. Residues 845 to 860 are compositionally biased toward polar residues; that stretch reads SKSSEPTVSVSPSRPT. The Proton acceptor role is filled by Asp936. Thr981 is subject to Phosphothreonine. Residues 1087-1115 are disordered; that stretch reads LRQRSRSMSSPGAKHSRHSSSPHSPLPSN. Position 1093 is a phosphoserine (Ser1093).

The protein belongs to the protein kinase superfamily. Ser/Thr protein kinase family. GCN2 subfamily. Forms dimers with HSPA5/BIP in resting cells. Homotetramerizes in response to endoplasmic reticulum (ER) stress, leading to its activation. Interacts with HSP90B1/GRP94. Interacts with DNAJC3; inhibiting EIF2AK3/PERK activity. Interacts with ATAD3A; ATAD3A and EIF2S1/eIF-2-alpha occupy a common binding site within the cytoplasmic loop of EIF2AK3/PERK, leading to prevent EIF2AK3/PERK association with its substrate EIF2S1/eIF-2-alpha. Interacts with MFN2. Interacts with TMEM33. Interacts with PDIA6. Interacts with LACC1. Post-translationally, oligomerization of the N-terminal ER luminal domain by ER stress promotes EIF2AK3/PERK trans-autophosphorylation of the C-terminal cytoplasmic kinase domain at multiple residues including Thr-981 on the kinase activation loop. Autophosphorylated at Tyr-619 following endoplasmic reticulum stress, leading to activate its activity. Dephosphorylated at Tyr-619 by PTPN1/PTP1B, leading to inactivate its enzyme activity. Phosphorylation at Thr-802 by AKT (AKT1, AKT2 and/or AKT3) inactivates EIF2AK3/PERK. In terms of processing, ADP-ribosylated by PARP16 upon ER stress, which increases kinase activity.

The protein localises to the endoplasmic reticulum membrane. It carries out the reaction L-seryl-[protein] + ATP = O-phospho-L-seryl-[protein] + ADP + H(+). The enzyme catalyses L-threonyl-[protein] + ATP = O-phospho-L-threonyl-[protein] + ADP + H(+). The catalysed reaction is L-tyrosyl-[protein] + ATP = O-phospho-L-tyrosyl-[protein] + ADP + H(+). Its activity is regulated as follows. Inhibited by HSPA5/BIP in absence of stress. Perturbation in protein folding in the endoplasmic reticulum (ER) promotes reversible dissociation from HSPA5/BIP and oligomerization, resulting in trans-autophosphorylation and kinase activity induction. Inactivated following phosphorylation at Thr-802 by AKT (AKT1, AKT2 and/or AKT3). Inhibited by ATAD3A at mitochondria-endoplasmic reticulum contact sites, providing a safe haven for mitochondrial protein translation during ER stress. In terms of biological role, metabolic-stress sensing protein kinase that phosphorylates the alpha subunit of eukaryotic translation initiation factor 2 (EIF2S1/eIF-2-alpha) in response to various stress, such as unfolded protein response (UPR). Key effector of the integrated stress response (ISR) to unfolded proteins: EIF2AK3/PERK specifically recognizes and binds misfolded proteins, leading to its activation and EIF2S1/eIF-2-alpha phosphorylation. EIF2S1/eIF-2-alpha phosphorylation in response to stress converts EIF2S1/eIF-2-alpha in a global protein synthesis inhibitor, leading to a global attenuation of cap-dependent translation, while concomitantly initiating the preferential translation of ISR-specific mRNAs, such as the transcriptional activators ATF4 and QRICH1, and hence allowing ATF4- and QRICH1-mediated reprogramming. The EIF2AK3/PERK-mediated unfolded protein response increases mitochondrial oxidative phosphorylation by promoting ATF4-mediated expression of COX7A2L/SCAF1, thereby increasing formation of respiratory chain supercomplexes. In contrast to most subcellular compartments, mitochondria are protected from the EIF2AK3/PERK-mediated unfolded protein response due to EIF2AK3/PERK inhibition by ATAD3A at mitochondria-endoplasmic reticulum contact sites. In addition to EIF2S1/eIF-2-alpha, also phosphorylates NFE2L2/NRF2 in response to stress, promoting release of NFE2L2/NRF2 from the BCR(KEAP1) complex, leading to nuclear accumulation and activation of NFE2L2/NRF2. Serves as a critical effector of unfolded protein response (UPR)-induced G1 growth arrest due to the loss of cyclin-D1 (CCND1). Involved in control of mitochondrial morphology and function. This Bos taurus (Bovine) protein is Eukaryotic translation initiation factor 2-alpha kinase 3.